Consider the following 162-residue polypeptide: NADPH-dependent 7-cyano-7-deazaguanine reductase (162 aa).

Cysteine 53 acts as the Thioimide intermediate in catalysis. The active-site Proton donor is the aspartate 60. Residues 75 to 77 (VES) and 94 to 95 (HE) contribute to the substrate site.

Belongs to the GTP cyclohydrolase I family. QueF type 1 subfamily.

It is found in the cytoplasm. It carries out the reaction 7-aminomethyl-7-carbaguanine + 2 NADP(+) = 7-cyano-7-deazaguanine + 2 NADPH + 3 H(+). Its pathway is tRNA modification; tRNA-queuosine biosynthesis. Catalyzes the NADPH-dependent reduction of 7-cyano-7-deazaguanine (preQ0) to 7-aminomethyl-7-deazaguanine (preQ1). In Exiguobacterium sp. (strain ATCC BAA-1283 / AT1b), this protein is NADPH-dependent 7-cyano-7-deazaguanine reductase.